A 611-amino-acid chain; its full sequence is tRNA uridine 5-carboxymethylaminomethyl modification enzyme MnmG (611 aa).

Position 14–19 (14–19) interacts with FAD; it reads GAGHAG. 274–288 lines the NAD(+) pocket; sequence GPRYCPSIEDKIVKF.

This sequence belongs to the MnmG family. In terms of assembly, homodimer. Heterotetramer of two MnmE and two MnmG subunits. FAD serves as cofactor.

Its subcellular location is the cytoplasm. Its function is as follows. NAD-binding protein involved in the addition of a carboxymethylaminomethyl (cmnm) group at the wobble position (U34) of certain tRNAs, forming tRNA-cmnm(5)s(2)U34. This is tRNA uridine 5-carboxymethylaminomethyl modification enzyme MnmG from Chlamydia caviae (strain ATCC VR-813 / DSM 19441 / 03DC25 / GPIC) (Chlamydophila caviae).